Reading from the N-terminus, the 134-residue chain is Fluoride-specific ion channel FluC (134 aa).

4 consecutive transmembrane segments (helical) span residues 7–27 (LAVAIGGSLGAMSRYLVTIMA), 38–58 (GTLLVNTLGSFLAGFFLIVLV), 69–89 (LFLFTGFLGAFTTFSSFAAES), and 110–130 (VGSLSMVFVGTLVAKYVLLGH). Na(+) is bound by residues G77 and T80.

It belongs to the fluoride channel Fluc/FEX (TC 1.A.43) family.

It localises to the cell inner membrane. The catalysed reaction is fluoride(in) = fluoride(out). With respect to regulation, na(+) is not transported, but it plays an essential structural role and its presence is essential for fluoride channel function. In terms of biological role, fluoride-specific ion channel. Important for reducing fluoride concentration in the cell, thus reducing its toxicity. The protein is Fluoride-specific ion channel FluC of Legionella pneumophila (strain Lens).